We begin with the raw amino-acid sequence, 40 residues long: uncharacterized protein (40 aa).

A signal peptide spans 1-27; the sequence is MFPADVILQCFGFSVGIALVGYVISLF.

This is an uncharacterized protein from Archaeoglobus fulgidus (strain ATCC 49558 / DSM 4304 / JCM 9628 / NBRC 100126 / VC-16).